Here is a 356-residue protein sequence, read N- to C-terminus: Na(+)/H(+) exchange regulatory cofactor NHE-RF1 (356 aa).

At S2 the chain carries N-acetylserine. Phosphoserine occurs at positions 2 and 46. In terms of domain architecture, PDZ 1 spans 14–94 (LCCLEKGPNG…AVRLLVVDPE (81 aa)). A disordered region spans residues 113 to 142 (AQEKSEHTEPPAAADTKKAGDQNEAEKSHL). The PDZ 2 domain occupies 151–231 (LCTMKKGPNG…EAKLLVVDKE (81 aa)). Residues 265–356 (NSREALVEPA…SKKNELFSNL (92 aa)) form a disordered region. 4 positions are modified to phosphoserine: S266, S277, S287, and S288. The span at 272–288 (EPASESPRPALARSASS) shows a compositional bias: low complexity. T290 is subject to Phosphothreonine. 2 positions are modified to phosphoserine: S291 and S299. Residues 307–317 (EPSSTSSSSDP) are compositionally biased toward low complexity. Positions 346 to 356 (WSKKNELFSNL) are enriched in basic and acidic residues.

In terms of assembly, homodimer, and heterodimer with NHERF2. Binds the N-termini of EZR, RDX and MSN. Binds the C-termini of PDGFRA, PDGFRB, ADRB2, NOS2 and CFTR. Binds ARHGAP17, EPI64, RACK1, OPRK1, GNAQ, CTNNB1 and PLCB3. Binds PDZK1. Interacts with CLCN3. Binds the C-terminus of PAG1. In resting T-cells, part of a PAG1-NHERF1-MSN complex which is disrupted upon TCR activation. Forms a complex with CFTR and SLC4A7. Forms a complex with SLC4A7 and ATP6V1B1. Interacts with TRPC4 (via the PDZ-binding domain). Directly interacts with HTR4. Interacts (via the PDZ 1 domain) with PODXL (via the C-terminal PDZ-binding motif DTHL); interaction is not detected in glomerular epithelium cells. Interacts (via the PDZ 1 domain) with PODXL (via the C-terminal PDZ-binding motif DTHL); the interaction take place early in the secretory pathway and is necessary for its apical membrane sorting. Interacts with SLC26A3. Interacts with MCC. Interacts with SLC34A1. Interacts (via the PDZ domains) with SLC26A6 isoform 4 and isoform 5. Interacts (via PDZ domains) with ACE2 (via PDZ-binding motif); the interaction may enhance ACE2 membrane residence.

The protein resides in the cytoplasm. It localises to the apical cell membrane. The protein localises to the cell projection. Its subcellular location is the filopodium. It is found in the ruffle. The protein resides in the microvillus. It localises to the endomembrane system. In terms of biological role, scaffold protein that connects plasma membrane proteins with members of the ezrin/moesin/radixin family and thereby helps to link them to the actin cytoskeleton and to regulate their surface expression. Necessary for recycling of internalized ADRB2. Was first known to play a role in the regulation of the activity and subcellular location of SLC9A3. Necessary for cAMP-mediated phosphorylation and inhibition of SLC9A3. Involved in sperm capacitation. May participate in the regulation of the chloride and bicarbonate homeostasis in spermatozoa. May enhance Wnt signaling. May participate in HTR4 targeting to microvilli. Involved in the regulation of phosphate reabsorption in the renal proximal tubules. The chain is Na(+)/H(+) exchange regulatory cofactor NHE-RF1 (Nherf1) from Rattus norvegicus (Rat).